A 243-amino-acid chain; its full sequence is Pyridoxine 5'-phosphate synthase (243 aa).

Asn-9 is a 3-amino-2-oxopropyl phosphate binding site. Residue 11-12 (DH) participates in 1-deoxy-D-xylulose 5-phosphate binding. A 3-amino-2-oxopropyl phosphate-binding site is contributed by Arg-20. The Proton acceptor role is filled by His-45. 2 residues coordinate 1-deoxy-D-xylulose 5-phosphate: Arg-47 and His-52. Glu-72 acts as the Proton acceptor in catalysis. Residue Thr-102 participates in 1-deoxy-D-xylulose 5-phosphate binding. His-193 functions as the Proton donor in the catalytic mechanism. 3-amino-2-oxopropyl phosphate is bound by residues Gly-194 and 215-216 (GH).

The protein belongs to the PNP synthase family. Homooctamer; tetramer of dimers.

Its subcellular location is the cytoplasm. The catalysed reaction is 3-amino-2-oxopropyl phosphate + 1-deoxy-D-xylulose 5-phosphate = pyridoxine 5'-phosphate + phosphate + 2 H2O + H(+). The protein operates within cofactor biosynthesis; pyridoxine 5'-phosphate biosynthesis; pyridoxine 5'-phosphate from D-erythrose 4-phosphate: step 5/5. Catalyzes the complicated ring closure reaction between the two acyclic compounds 1-deoxy-D-xylulose-5-phosphate (DXP) and 3-amino-2-oxopropyl phosphate (1-amino-acetone-3-phosphate or AAP) to form pyridoxine 5'-phosphate (PNP) and inorganic phosphate. In Escherichia coli O6:H1 (strain CFT073 / ATCC 700928 / UPEC), this protein is Pyridoxine 5'-phosphate synthase.